We begin with the raw amino-acid sequence, 138 residues long: Succinate dehydrogenase assembly factor 4, mitochondrial (138 aa).

The N-terminal 32 residues, 1-32 (MLCAIKSTGYRYPRTGALNLLRGRPFNMATRK), are a transit peptide targeting the mitochondrion. Residues 71–98 (QATGDRTKESLNSPLLTKNDIGSFSPEF) are compositionally biased toward polar residues. Residues 71-138 (QATGDRTKES…YSFNGRVTDF (68 aa)) form a disordered region.

This sequence belongs to the SDHAF4 family. As to quaternary structure, interacts with SDH1 in its FAD-bound form.

The protein localises to the mitochondrion matrix. Functionally, plays an essential role in the assembly of succinate dehydrogenase (SDH), an enzyme complex (also referred to as respiratory complex II) that is a component of both the tricarboxylic acid (TCA) cycle and the mitochondrial electron transport chain, and which couples the oxidation of succinate to fumarate with the reduction of ubiquinone (coenzyme Q) to ubiquinol. Binds to the flavoprotein subunit SDH1 in its FAD-bound form, blocking the generation of excess reactive oxygen species (ROS) and facilitating its assembly with the iron-sulfur protein subunit SDH2 into the SDH catalytic dimer. This is Succinate dehydrogenase assembly factor 4, mitochondrial from Saccharomyces cerevisiae (strain ATCC 204508 / S288c) (Baker's yeast).